The sequence spans 255 residues: Indole-3-glycerol phosphate synthase (255 aa).

It belongs to the TrpC family.

It catalyses the reaction 1-(2-carboxyphenylamino)-1-deoxy-D-ribulose 5-phosphate + H(+) = (1S,2R)-1-C-(indol-3-yl)glycerol 3-phosphate + CO2 + H2O. The protein operates within amino-acid biosynthesis; L-tryptophan biosynthesis; L-tryptophan from chorismate: step 4/5. The polypeptide is Indole-3-glycerol phosphate synthase (Streptococcus thermophilus (strain CNRZ 1066)).